We begin with the raw amino-acid sequence, 640 residues long: MVSNPVHGLPFLPGTSFKDSTKTAFHRSQTLSYRNGYAIVRRPTVGIGGDRLQFNQLSQAELDELASKAPVLTYGQPKQAPPADFIPAHVAFDKKVLKFDAYFQEDVPMSTEEQYRIRQVNIYYYLEDDSMSVIEPVVENSGILQGKLIKRQRLAKNDRGDHYHWKDLNRGINITIYGKTFRVVDCDQFTQVFLESQGIELNPPEKMALDPYTELRKQPLRKYVTPSDFDQLKQFLTFDKQVLRFYAIWDDTDSMYGECRTYIIHYYLMDDTVEIREVHERNDGRDPFPLLMNRQRVPKVLVENAKNFPQCVLEISDQEVLEWYTAKDFIVGKSLTILGRTFFIYDCDPFTRRYYKEKFGITDLPRIDVSKREPPPVKQELPPYNGFGLVEDSAQNCFALIPKAPKKDVIKMLVNDNKVLRYLAVLESPIPEDKDRRFVFSYFLATDMISIFEPPVRNSGIIGGKYLGRTKVVKPYSTVDNPVYYGPSDFFIGAVIEVFGHRFIILDTDEYVLKYMESNAAQYSPEALASIQNHVRKREAPAPEAESKQTEKDPGVQELEALIDTIQKQLKDHSCKDNIREAFQIYDKEASGYVDRDMFFKICESLNVPVDDSLVKELIRMCSHGEGKINYYNFVRAFSN.

Residues 1–45 (MVSNPVHGLPFLPGTSFKDSTKTAFHRSQTLSYRNGYAIVRRPTV) form a required for its localization in the mitotic spindle and interaction with alpha-tubulin region. 3 consecutive DM10 domains span residues 93–198 (DKKV…ESQG), 239–359 (DKQV…KEKF), and 416–520 (DNKV…ESNA). A disordered region spans residues 535 to 554 (VRKREAPAPEAESKQTEKDP). Basic and acidic residues predominate over residues 538–554 (REAPAPEAESKQTEKDP). An EF-hand domain is found at 574–609 (SCKDNIREAFQIYDKEASGYVDRDMFFKICESLNVP).

In terms of assembly, microtubule inner protein component of sperm flagellar doublet microtubules. Interacts with the C-terminus of CACNA1E. Interacts with alpha-tubulin. Widely expressed. Not detected in lymphocytes.

The protein localises to the cytoplasm. It is found in the cytoskeleton. The protein resides in the cilium axoneme. It localises to the flagellum axoneme. Its subcellular location is the microtubule organizing center. The protein localises to the centrosome. It is found in the spindle. The protein resides in the spindle pole. Functionally, microtubule inner protein (MIP) part of the dynein-decorated doublet microtubules (DMTs) in cilia axoneme, which is required for motile cilia beating. Microtubule-associated protein which regulates cell division and neuronal migration during cortical development. Necessary for radial and tangential cell migration during brain development, possibly acting as a regulator of cell morphology and process formation during migration. May enhance calcium influx through CACNA1E and stimulate programmed cell death. The polypeptide is EF-hand domain-containing protein 1 (Homo sapiens (Human)).